A 256-amino-acid polypeptide reads, in one-letter code: DNA repair protein RecO (256 aa).

The protein belongs to the RecO family.

Involved in DNA repair and RecF pathway recombination. In Anaeromyxobacter sp. (strain Fw109-5), this protein is DNA repair protein RecO.